A 131-amino-acid chain; its full sequence is Small ribosomal subunit protein eS8 (131 aa).

A disordered region spans residues 1–38 (MKLGAYYKGGDLKKPSGGKKRKVRRTKKKALGGGPPQI). Residues 16-30 (SGGKKRKVRRTKKKA) are compositionally biased toward basic residues.

This sequence belongs to the eukaryotic ribosomal protein eS8 family. As to quaternary structure, part of the 30S ribosomal subunit.

The polypeptide is Small ribosomal subunit protein eS8 (Pyrobaculum arsenaticum (strain DSM 13514 / JCM 11321 / PZ6)).